We begin with the raw amino-acid sequence, 92 residues long: MEQYEDKSGLLLVQLNQLSDNRSKKVLQGFVKDVLTYEKSKIGTQLTDSETELGVSKSLVQSSKQQNISSTYFLDLCNKHIINSEFTSSYLY.

This is an uncharacterized protein from Dictyostelium discoideum (Social amoeba).